A 467-amino-acid chain; its full sequence is Translation initiation factor eIF2B subunit delta (467 aa).

A disordered region spans residues 1 to 106 (MGFSAEQAKK…QNPQNSPETD (106 aa)). 4 positions are modified to phosphoserine: serine 16, serine 19, serine 21, and serine 23. The span at 16-37 (SPVSESSSVGGTSPATASSVVS) shows a compositional bias: polar residues. At threonine 27 the chain carries Phosphothreonine. Serine 28 and serine 37 each carry phosphoserine. The segment covering 51-61 (LKKARKQASRR) has biased composition (basic residues). The segment covering 84–102 (PNKNSNQQKKASKQNPQNS) has biased composition (low complexity).

It belongs to the eIF-2B alpha/beta/delta subunits family. In terms of assembly, component of the translation initiation factor 2B (eIF2B) complex which is a heterodecamer of two sets of five different subunits: alpha, beta, gamma, delta and epsilon. Subunits alpha, beta and delta comprise a regulatory subcomplex and subunits epsilon and gamma comprise a catalytic subcomplex. Within the complex, the hexameric regulatory complex resides at the center, with the two heterodimeric catalytic subcomplexes bound on opposite sides.

It is found in the cytoplasm. The protein localises to the cytosol. Functionally, acts as a component of the translation initiation factor 2B (eIF2B) complex, which catalyzes the exchange of GDP for GTP on the eukaryotic initiation factor 2 (eIF2) complex gamma subunit. Its guanine nucleotide exchange factor activity is repressed when bound to eIF2 complex phosphorylated on the alpha subunit, thereby limiting the amount of methionyl-initiator methionine tRNA available to the ribosome and consequently global translation is repressed. The chain is Translation initiation factor eIF2B subunit delta (tif224) from Schizosaccharomyces pombe (strain 972 / ATCC 24843) (Fission yeast).